We begin with the raw amino-acid sequence, 230 residues long: Potassium/proton antiporter CemA (230 aa).

Transmembrane regions (helical) follow at residues 7-27 (LPSL…SSSF), 106-126 (IILH…SFFL), 145-165 (LNDS…VGFH), and 181-201 (FGWA…PVIL).

The protein belongs to the CemA family.

The protein localises to the plastid. Its subcellular location is the chloroplast inner membrane. The enzyme catalyses K(+)(in) + H(+)(out) = K(+)(out) + H(+)(in). Contributes to K(+)/H(+) antiport activity by supporting proton efflux to control proton extrusion and homeostasis in chloroplasts in a light-dependent manner to modulate photosynthesis. Prevents excessive induction of non-photochemical quenching (NPQ) under continuous-light conditions. Indirectly promotes efficient inorganic carbon uptake into chloroplasts. This chain is Potassium/proton antiporter CemA, found in Hordeum vulgare (Barley).